The sequence spans 374 residues: MTKQTVLYDQHVAEGARMVDFHGWMMPLHYGSQLEEHHAVRSDAGMFDVSHMTIVDLHGVRVRDFLRHLLANDVARLTQPGKALYSAMLNASGGVIDDLIVYFMADHHFRLVVNSATRERDLAWIGEHAPAFGVEICERRDLALIAVQGPTARQRVDALLTPAQRQMVAGMKPFFGRQVGSLFIATTGYTGEDGYEIALPQDEAVAFWQQLVQAGIRPCGLAARDTLRLEAGMNLYGQEMDEQISPLAANMGWTIAWAPPERDFIGRAALERQQSQHPEQLVGLVMREKGVLRAGMTIRCRDGQGDPCLGTITSGSFSPTLGCSIALARVPQGIGGEAWVEIRGRELALSVVKPGFVRHGHSLIPPADATAVGN.

Belongs to the GcvT family. The glycine cleavage system is composed of four proteins: P, T, L and H.

It catalyses the reaction N(6)-[(R)-S(8)-aminomethyldihydrolipoyl]-L-lysyl-[protein] + (6S)-5,6,7,8-tetrahydrofolate = N(6)-[(R)-dihydrolipoyl]-L-lysyl-[protein] + (6R)-5,10-methylene-5,6,7,8-tetrahydrofolate + NH4(+). In terms of biological role, the glycine cleavage system catalyzes the degradation of glycine. The protein is Aminomethyltransferase of Edwardsiella ictaluri (strain 93-146).